A 352-amino-acid chain; its full sequence is MTSVDTPTPHGGTPAPAPATANGRKLLRIEARNAQTPIERKPKWIRTRATMGPEYSELKGLVKREGLHTVCEEAGCPNIFECWEDREATFLIGGEQCTRRCDFCQIDTGKPAALDRDEPRRVAESVQAMGLRYSTITGVARDDLEDGGAWLYAETVRAIKRLNPATGVELLIPDFNADPDQLAEVFSARPEVLAHNLETVPRIFKRIRPAFRYERSLSVLTAAREAGLVTKSNLILGMGETPEEVTEAMRDLHEAGCDILTITQYLRPSPRHHPVDRWVKPEEFVEHSRVAEEIGFAGVMAGPLVRSSYRAGRLYAQAMAHHGREIPPAMAHLAEEGTASQEASAVLARFGS.

Residues 1–21 (MTSVDTPTPHGGTPAPAPATA) form a disordered region. 7 residues coordinate [4Fe-4S] cluster: C71, C76, C82, C97, C101, C104, and S308. Positions 83–297 (WEDREATFLI…SRVAEEIGFA (215 aa)) constitute a Radical SAM core domain.

This sequence belongs to the radical SAM superfamily. Lipoyl synthase family. The cofactor is [4Fe-4S] cluster.

It is found in the cytoplasm. The catalysed reaction is [[Fe-S] cluster scaffold protein carrying a second [4Fe-4S](2+) cluster] + N(6)-octanoyl-L-lysyl-[protein] + 2 oxidized [2Fe-2S]-[ferredoxin] + 2 S-adenosyl-L-methionine + 4 H(+) = [[Fe-S] cluster scaffold protein] + N(6)-[(R)-dihydrolipoyl]-L-lysyl-[protein] + 4 Fe(3+) + 2 hydrogen sulfide + 2 5'-deoxyadenosine + 2 L-methionine + 2 reduced [2Fe-2S]-[ferredoxin]. The protein operates within protein modification; protein lipoylation via endogenous pathway; protein N(6)-(lipoyl)lysine from octanoyl-[acyl-carrier-protein]: step 2/2. Catalyzes the radical-mediated insertion of two sulfur atoms into the C-6 and C-8 positions of the octanoyl moiety bound to the lipoyl domains of lipoate-dependent enzymes, thereby converting the octanoylated domains into lipoylated derivatives. This is Lipoyl synthase from Nocardia farcinica (strain IFM 10152).